Consider the following 277-residue polypeptide: Alpha-ketoglutarate-dependent dioxygenase tstK (277 aa).

Belongs to the asaB hydroxylase/desaturase family.

It carries out the reaction 2-[(1R,8S,14R,15R)-11-hydroxy-14,15-bis[(6E)-oct-6-en-1-yl]-3,5,9-trioxo-4,10-dioxatetracyclo[9.4.0.0(2,6).0(8,12)]pentadeca-2(6),12-dien-8-yl]acetate + 3 2-oxoglutarate + 3 O2 = phomoidride A + 3 succinate + 3 CO2 + H2O. In terms of biological role, alpha-ketoglutarate-dependent dioxygenase; part of the gene cluster that mediates the biosynthesis of the antihypercholesterolemic agents phomoidrides which are dimeric anhydrides. Within the pathway, tstK is responsible for the iterative oxidation necessary to convert prephomoidride to phomoidride A. The pathway begins with the highly reducing polyketide synthase tstiA that catalyzes the formation of a C12-fatty acyl-ACP, starting from one acetate and 5 malonate units. The hydrolase tstM is involved in the release of the C12-fatty acyl chain from phiA. The alkylcitrate synthase (ACS) tstJ and the alkylcitrate dehydratase (ACDH) tstI then give rise to decarboxylated monomeric anhydrides by coupling the C12-fatty acyl chain with oxalacetic acid. The cyclase tstC is responsible for the dimerization of the monomeric anhydrides which leads to the production of prephomoidride that contains the characteristic bicyclo[4.3.1]deca-1,6-diene system of phomoidrides. Iterative oxidation catalyzed by the alpha-ketoglutarate-dependent dioxygenase tstK produced then phomoidride A. Finally, the methyltransferase tstE converts phomoidride A to phomoidride B via an acetalization reaction. The phosphatidylethanolamine-binding protein tstB and tstN are not essential for dimerization and their functions have still to be determined. In Talaromyces stipitatus (strain ATCC 10500 / CBS 375.48 / QM 6759 / NRRL 1006) (Penicillium stipitatum), this protein is Alpha-ketoglutarate-dependent dioxygenase tstK.